The chain runs to 58 residues: ATP synthase subunit a (58 aa).

The next 2 membrane-spanning stretches (helical) occupy residues 11–31 (EIFY…LTGL) and 35–55 (VAIL…NDAI).

This sequence belongs to the ATPase A chain family. F-type ATPases have 2 components, CF(1) - the catalytic core - and CF(0) - the membrane proton channel. CF(1) has five subunits: alpha(3), beta(3), gamma(1), delta(1), epsilon(1). CF(0) has three main subunits: a, b and c.

The protein localises to the mitochondrion inner membrane. Mitochondrial membrane ATP synthase (F(1)F(0) ATP synthase or Complex V) produces ATP from ADP in the presence of a proton gradient across the membrane which is generated by electron transport complexes of the respiratory chain. F-type ATPases consist of two structural domains, F(1) - containing the extramembraneous catalytic core and F(0) - containing the membrane proton channel, linked together by a central stalk and a peripheral stalk. During catalysis, ATP synthesis in the catalytic domain of F(1) is coupled via a rotary mechanism of the central stalk subunits to proton translocation. Key component of the proton channel; it may play a direct role in the translocation of protons across the membrane. The protein is ATP synthase subunit a (ATP6) of Brassica tournefortii (Wild turnip).